Reading from the N-terminus, the 358-residue chain is D-xylulose reductase A (358 aa).

Zn(2+) is bound by residues C47, H72, and E73. 182–187 serves as a coordination point for NAD(+); that stretch reads GAGPVG.

This sequence belongs to the zinc-containing alcohol dehydrogenase family. Zn(2+) is required as a cofactor.

The enzyme catalyses xylitol + NAD(+) = D-xylulose + NADH + H(+). Its pathway is carbohydrate degradation; L-arabinose degradation via L-arabinitol; D-xylulose 5-phosphate from L-arabinose (fungal route): step 4/5. In terms of biological role, xylitol dehydrogenase which catalyzes the conversion of xylitol to D-xylulose. Xylose is a major component of hemicelluloses such as xylan. Most fungi utilize D-xylose via three enzymatic reactions, xylose reductase (XR), xylitol dehydrogenase (XDH), and xylulokinase, to form xylulose 5-phosphate, which enters pentose phosphate pathway. This is D-xylulose reductase A (xdhA) from Aspergillus oryzae (strain ATCC 42149 / RIB 40) (Yellow koji mold).